Here is a 168-residue protein sequence, read N- to C-terminus: Phosphopantetheine adenylyltransferase (168 aa).

Residue threonine 13 coordinates substrate. ATP-binding positions include 13–14 (TF) and histidine 21. The substrate site is built by lysine 45, leucine 78, and arginine 92. ATP contacts are provided by residues 93–95 (GLR), glutamate 103, and 128–134 (TQFISSS).

It belongs to the bacterial CoaD family. As to quaternary structure, homohexamer. Requires Mg(2+) as cofactor.

The protein localises to the cytoplasm. It catalyses the reaction (R)-4'-phosphopantetheine + ATP + H(+) = 3'-dephospho-CoA + diphosphate. It functions in the pathway cofactor biosynthesis; coenzyme A biosynthesis; CoA from (R)-pantothenate: step 4/5. Reversibly transfers an adenylyl group from ATP to 4'-phosphopantetheine, yielding dephospho-CoA (dPCoA) and pyrophosphate. This chain is Phosphopantetheine adenylyltransferase, found in Wolbachia pipientis subsp. Culex pipiens (strain wPip).